The chain runs to 142 residues: Matrix protein (142 aa).

As to quaternary structure, homooligomer. Forms homotetramers. Interacts with phosphoprotein P. Binds to ssRNA.

The protein resides in the virion. It localises to the host cytoplasm. Its subcellular location is the host cell membrane. It is found in the host nucleus. Plays a crucial role in virion assembly and budding. The sequence is that of Matrix protein (M) from Borna disease virus (strain V) (BDV).